The chain runs to 99 residues: Large ribosomal subunit protein uL23 (99 aa).

Contacts protein L29, and trigger factor when it is bound to the ribosome. Part of the 50S ribosomal subunit.

Functionally, one of the early assembly proteins it binds 23S rRNA. One of the proteins that surrounds the polypeptide exit tunnel on the outside of the ribosome. Forms the main docking site for trigger factor binding to the ribosome. The chain is Large ribosomal subunit protein uL23 from Rhodopseudomonas palustris (strain ATCC BAA-98 / CGA009).